Consider the following 104-residue polypeptide: Large ribosomal subunit protein bL21 (104 aa).

Belongs to the bacterial ribosomal protein bL21 family. Part of the 50S ribosomal subunit. Contacts protein L20.

In terms of biological role, this protein binds to 23S rRNA in the presence of protein L20. In Pseudomonas entomophila (strain L48), this protein is Large ribosomal subunit protein bL21.